A 477-amino-acid polypeptide reads, in one-letter code: Cytochrome c oxidase subunit 1 (477 aa).

A helical transmembrane segment spans residues Val16 to Trp36. Glu41 and Gly46 together coordinate Ca(2+). Fe(II)-heme a is bound at residue His62. 6 helical membrane passes run Ile64–Leu84, Phe101–Tyr121, Ile149–Leu171, Leu185–Ala205, Leu236–Val256, and Val269–Val289. Cu cation is bound at residue His242. The segment at residues His242–Tyr246 is a cross-link (1'-histidyl-3'-tyrosine (His-Tyr)). Tyr246 contributes to the O2 binding site. Residues His292 and His293 each coordinate Cu cation. Helical transmembrane passes span Ala309–Ile329 and Thr340–Leu360. Mg(2+) is bound by residues His370 and Asp371. His378 provides a ligand contact to heme a3. Residue His380 coordinates Fe(II)-heme a. A run of 2 helical transmembrane segments spans residues Val382–Phe402 and Phe416–Gly436. Position 443 (Pro443) interacts with Ca(2+). Residues Trp455–Trp475 form a helical membrane-spanning segment.

This sequence belongs to the heme-copper respiratory oxidase family. In terms of assembly, component of the cytochrome c oxidase (complex IV, CIV), a multisubunit enzyme composed of a catalytic core of 3 subunits and several supernumerary subunits. The complex exists as a monomer or a dimer and forms supercomplexes (SCs) in the inner mitochondrial membrane with ubiquinol-cytochrome c oxidoreductase (cytochrome b-c1 complex, complex III, CIII). Heme is required as a cofactor. Cu cation serves as cofactor.

The protein localises to the mitochondrion inner membrane. It carries out the reaction 4 Fe(II)-[cytochrome c] + O2 + 8 H(+)(in) = 4 Fe(III)-[cytochrome c] + 2 H2O + 4 H(+)(out). Its pathway is energy metabolism; oxidative phosphorylation. Functionally, component of the cytochrome c oxidase, the last enzyme in the mitochondrial electron transport chain which drives oxidative phosphorylation. The respiratory chain contains 3 multisubunit complexes succinate dehydrogenase (complex II, CII), ubiquinol-cytochrome c oxidoreductase (cytochrome b-c1 complex, complex III, CIII) and cytochrome c oxidase (complex IV, CIV), that cooperate to transfer electrons derived from NADH and succinate to molecular oxygen, creating an electrochemical gradient over the inner membrane that drives transmembrane transport and the ATP synthase. Cytochrome c oxidase is the component of the respiratory chain that catalyzes the reduction of oxygen to water. Electrons originating from reduced cytochrome c in the intermembrane space (IMS) are transferred via the dinuclear copper A center (CU(A)) of subunit 2 and heme A of subunit 1 to the active site in subunit 1, a binuclear center (BNC) formed by heme A3 and copper B (CU(B)). The BNC reduces molecular oxygen to 2 water molecules using 4 electrons from cytochrome c in the IMS and 4 protons from the mitochondrial matrix. This is Cytochrome c oxidase subunit 1 (COI) from Pecten maximus (King scallop).